The chain runs to 91 residues: Antifungal protein opdH (91 aa).

Residues 1–18 (MQFSSLSLVFLAVIGAIA) form the signal peptide. The propeptide occupies 19-33 (NPIAVDSELENRDVQ). 3 disulfides stabilise this stretch: Cys-41–Cys-69, Cys-48–Cys-76, and Cys-61–Cys-87.

Belongs to the antifungal protein pafB family.

The protein resides in the secreted. The protein localises to the host cytoplasm. Functionally, antifungal protein; part of the gene cluster that mediates the biosynthesis of oxopyrrolidines, polyketide-amino acid hybrid compounds with feature structures of tetramic acid. Acts as an inhibitor of growth of various molds and yeasts. In Penicillium oxalicum (strain 114-2 / CGMCC 5302) (Penicillium decumbens), this protein is Antifungal protein opdH.